Here is a 386-residue protein sequence, read N- to C-terminus: Acyl-lipid omega-3 desaturase (cytochrome b5), endoplasmic reticulum (386 aa).

Residues 1–30 form a disordered region; it reads MVVAMDQRTNVNGDPGAGDRKKEERFDPSA. Over residues 17–27 the composition is skewed to basic and acidic residues; it reads AGDRKKEERFD. The chain crosses the membrane as a helical span at residues 63–83; sequence IIAVAALAIAAVYVDSWFLWP. The short motif at 101-105 is the Histidine box-1 element; that stretch reads HDCGH. The short motif at 137–141 is the Histidine box-2 element; sequence HRTHH. Helical transmembrane passes span 220–240 and 242–262; these read WSIMFVSLIALSFVFGPLAVL and VYGVPYIIFVMWLDAVTYLHH. The short motif at 304–308 is the Histidine box-3 element; that stretch reads HVIHH.

The protein belongs to the fatty acid desaturase type 1 family. In terms of tissue distribution, abundant in leaves and seedlings. Barely detectable in root tissue.

It localises to the endoplasmic reticulum membrane. The enzyme catalyses a (9Z,12Z)-octadecadienoyl-containing glycerolipid + 2 Fe(II)-[cytochrome b5] + O2 + 2 H(+) = (9Z,12Z,15Z)-octadecatrienoyl-containing glycerolipid + 2 Fe(III)-[cytochrome b5] + 2 H2O. The protein operates within lipid metabolism; polyunsaturated fatty acid biosynthesis. Its function is as follows. Microsomal (ER) omega-3 fatty acid desaturase introduces the third double bond in the biosynthesis of 18:3 fatty acids, important constituents of plant membranes. It is thought to use cytochrome b5 as an electron donor and to act on fatty acids esterified to phosphatidylcholine and, possibly, other phospholipids. The sequence is that of Acyl-lipid omega-3 desaturase (cytochrome b5), endoplasmic reticulum from Arabidopsis thaliana (Mouse-ear cress).